We begin with the raw amino-acid sequence, 336 residues long: Serpentine receptor class delta-51 (336 aa).

Transmembrane regions (helical) follow at residues 14-34, 48-68, 93-113, 133-153, 188-208, 237-257, and 275-295; these read VYYS…LFIM, YLFN…FAQC, CFVT…SILL, ATTF…QLLT, AAII…LIAF, GLLI…SYFL, and IFGS…VLPY.

The protein belongs to the nematode receptor-like protein srd family.

The protein resides in the membrane. The polypeptide is Serpentine receptor class delta-51 (srd-51) (Caenorhabditis elegans).